Consider the following 264-residue polypeptide: NFAT activation molecule 1 (264 aa).

An N-terminal signal peptide occupies residues 1–37 (MESWLLRRGARVRCLHPPSWLPAWCFLCLLPVPQTLQ). The Extracellular segment spans residues 38-159 (LTGLVSLTHT…QPPAFKVQEA (122 aa)). In terms of domain architecture, Ig-like V-type spans 49 to 145 (LPIMVSLANT…QSDGVVILVR (97 aa)). Cys64 and Cys110 are joined by a disulfide. N-linked (GlcNAc...) asparagine glycans are attached at residues Asn105 and Asn118. The chain crosses the membrane as a helical span at residues 160–180 (LMLGFTSLMSVLGVLGTALLL). Topologically, residues 181-264 (WKKKQISVLG…NEFNLVYENL (84 aa)) are cytoplasmic. The 21-residue stretch at 212 to 232 (ESVYTSLQRRETEVYACMKEE) folds into the ITAM domain. Residues Tyr215 and Tyr226 each carry the phosphotyrosine modification.

As to quaternary structure, no direct interaction with the B-cell antigen receptor (BCR). Interacts with SYK; probably involved in BCR signaling. Interacts with ZAP70. N-glycosylated. As to expression, highly expressed in the spleen, expressed by both B- and CD4+ and CD8+ T-cells, as well as non-T- and non-B-cells, including macrophages and neutrophils. Expressed at low levels, if any, in non-immune tissue.

Its subcellular location is the cell membrane. In terms of biological role, may function in immune system as a receptor which activates via the calcineurin/NFAT-signaling pathway the downstream cytokine gene promoters. Activates the transcription of IL-13 and TNF-alpha promoters. May be involved in the regulation of B-cell, but not T-cell, development. The sequence is that of NFAT activation molecule 1 (Nfam1) from Mus musculus (Mouse).